A 180-amino-acid polypeptide reads, in one-letter code: Fucolectin-3 (180 aa).

The signal sequence occupies residues 1–22; it reads MEVKMIILLFQILAISTLKSDS. Residues 31-179 form an F5/8 type C-like region; sequence QENVALRGRA…VEVNVLFPAP (149 aa). 4 residues coordinate Ca(2+): Asn58, Asp61, Asn63, and Ser72. 3 disulfides stabilise this stretch: Cys73/Cys168, Cys104/Cys105, and Cys130/Cys146. Residues His75 and Arg101 each contribute to the alpha-L-fucose site. The short motif at 101 to 103 is the Cell attachment site element; that stretch reads RGD. Arg108 provides a ligand contact to alpha-L-fucose. Residues Cys168 and Glu169 each coordinate Ca(2+).

The protein belongs to the fucolectin family. As to quaternary structure, homotrimer. In terms of tissue distribution, parenchymal hepatocytes.

It is found in the secreted. The protein resides in the extracellular space. In terms of biological role, acts as a defensive agent. Recognizes blood group fucosylated oligosaccharides including A, B, H and Lewis B-type antigens. Does not recognize Lewis A antigen and has low affinity for monovalent haptens. The protein is Fucolectin-3 of Anguilla japonica (Japanese eel).